Consider the following 237-residue polypeptide: Mitochondrial inner membrane protease atp23 (237 aa).

A divalent metal cation is bound at residue His136. Glu137 is a catalytic residue. Position 140 (His140) interacts with a divalent metal cation.

Belongs to the peptidase M76 family.

The protein localises to the mitochondrion inner membrane. Functionally, has a dual role in the assembly of mitochondrial ATPase. Acts as a protease that removes N-terminal residues of mitochondrial ATPase CF(0) subunit 6 at the intermembrane space side. Also involved in the correct assembly of the membrane-embedded ATPase CF(0) particle, probably mediating association of subunit 6 with the subunit 9 ring. The chain is Mitochondrial inner membrane protease atp23 (atp23) from Aspergillus clavatus (strain ATCC 1007 / CBS 513.65 / DSM 816 / NCTC 3887 / NRRL 1 / QM 1276 / 107).